We begin with the raw amino-acid sequence, 265 residues long: Putative pyruvate, phosphate dikinase regulatory protein 2 (265 aa).

Residue 150–157 coordinates ADP; it reads GVSRTSKT.

The protein belongs to the pyruvate, phosphate/water dikinase regulatory protein family. PDRP subfamily.

The enzyme catalyses N(tele)-phospho-L-histidyl/L-threonyl-[pyruvate, phosphate dikinase] + ADP = N(tele)-phospho-L-histidyl/O-phospho-L-threonyl-[pyruvate, phosphate dikinase] + AMP + H(+). The catalysed reaction is N(tele)-phospho-L-histidyl/O-phospho-L-threonyl-[pyruvate, phosphate dikinase] + phosphate + H(+) = N(tele)-phospho-L-histidyl/L-threonyl-[pyruvate, phosphate dikinase] + diphosphate. Its function is as follows. Bifunctional serine/threonine kinase and phosphorylase involved in the regulation of the pyruvate, phosphate dikinase (PPDK) by catalyzing its phosphorylation/dephosphorylation. This is Putative pyruvate, phosphate dikinase regulatory protein 2 from Latilactobacillus sakei subsp. sakei (strain 23K) (Lactobacillus sakei subsp. sakei).